An 813-amino-acid chain; its full sequence is Leucine--tRNA ligase (813 aa).

Positions 41-51 match the 'HIGH' region motif; it reads PYPSGTLHMGH. Positions 575–579 match the 'KMSKS' region motif; it reads KMSKS. K578 provides a ligand contact to ATP.

The protein belongs to the class-I aminoacyl-tRNA synthetase family.

It localises to the cytoplasm. It catalyses the reaction tRNA(Leu) + L-leucine + ATP = L-leucyl-tRNA(Leu) + AMP + diphosphate. In Francisella tularensis subsp. holarctica (strain FTNF002-00 / FTA), this protein is Leucine--tRNA ligase.